The sequence spans 350 residues: GTPase Obg (350 aa).

The Obg domain occupies methionine 1–leucine 159. The region spanning alanine 160–aspartate 337 is the OBG-type G domain. GTP contacts are provided by residues glycine 166 to serine 173, phenylalanine 191 to tyrosine 195, aspartate 213 to glycine 216, asparagine 287 to aspartate 290, and serine 318 to leucine 320. Positions 173 and 193 each coordinate Mg(2+).

This sequence belongs to the TRAFAC class OBG-HflX-like GTPase superfamily. OBG GTPase family. Monomer. Mg(2+) is required as a cofactor.

Its subcellular location is the cytoplasm. In terms of biological role, an essential GTPase which binds GTP, GDP and possibly (p)ppGpp with moderate affinity, with high nucleotide exchange rates and a fairly low GTP hydrolysis rate. Plays a role in control of the cell cycle, stress response, ribosome biogenesis and in those bacteria that undergo differentiation, in morphogenesis control. The chain is GTPase Obg from Xanthomonas campestris pv. campestris (strain 8004).